The chain runs to 263 residues: Imidazole glycerol phosphate synthase subunit HisF (263 aa).

Active-site residues include D11 and D131.

It belongs to the HisA/HisF family. In terms of assembly, heterodimer of HisH and HisF.

The protein localises to the cytoplasm. It carries out the reaction 5-[(5-phospho-1-deoxy-D-ribulos-1-ylimino)methylamino]-1-(5-phospho-beta-D-ribosyl)imidazole-4-carboxamide + L-glutamine = D-erythro-1-(imidazol-4-yl)glycerol 3-phosphate + 5-amino-1-(5-phospho-beta-D-ribosyl)imidazole-4-carboxamide + L-glutamate + H(+). The protein operates within amino-acid biosynthesis; L-histidine biosynthesis; L-histidine from 5-phospho-alpha-D-ribose 1-diphosphate: step 5/9. In terms of biological role, IGPS catalyzes the conversion of PRFAR and glutamine to IGP, AICAR and glutamate. The HisF subunit catalyzes the cyclization activity that produces IGP and AICAR from PRFAR using the ammonia provided by the HisH subunit. The sequence is that of Imidazole glycerol phosphate synthase subunit HisF from Deinococcus geothermalis (strain DSM 11300 / CIP 105573 / AG-3a).